Consider the following 322-residue polypeptide: MTASPSKLAQLRELSVVVADTGDYDAIKRLQPVDCTTNPTLVKKALDLPVYADLLERELAWGRAHGGDDRTTTVDEVADRLTIGVGVKLSALVPGRVSTEVDADLAHDTQATIAKARKFVAMYAERGVPKDKILIKIAATWEGIEAARQLQLEGIDCNLTLIFNRAQALACAEANVFLISPFVGRILDYYVAQGQTPASIDEDPGVVFVRTVYNAFKQRGSSTVVMGASFRSTAQIEALAGCDRLTISPDLLEKLDAEHGELPRKLSPGNANNAQITPIDSDSFASGLAADPMATEKLASGIDTFAKDLHALRKTIADKLAG.

The active-site Schiff-base intermediate with substrate is K136.

Belongs to the transaldolase family. Type 1 subfamily. In terms of assembly, homodimer.

The protein localises to the cytoplasm. It catalyses the reaction D-sedoheptulose 7-phosphate + D-glyceraldehyde 3-phosphate = D-erythrose 4-phosphate + beta-D-fructose 6-phosphate. It participates in carbohydrate degradation; pentose phosphate pathway; D-glyceraldehyde 3-phosphate and beta-D-fructose 6-phosphate from D-ribose 5-phosphate and D-xylulose 5-phosphate (non-oxidative stage): step 2/3. Transaldolase is important for the balance of metabolites in the pentose-phosphate pathway. This is Transaldolase from Xanthomonas oryzae pv. oryzae (strain PXO99A).